A 475-amino-acid polypeptide reads, in one-letter code: ATP synthase subunit beta (475 aa).

An ATP-binding site is contributed by 160-167 (GGAGVGKT).

It belongs to the ATPase alpha/beta chains family. F-type ATPases have 2 components, CF(1) - the catalytic core - and CF(0) - the membrane proton channel. CF(1) has five subunits: alpha(3), beta(3), gamma(1), delta(1), epsilon(1). CF(0) has three main subunits: a(1), b(2) and c(9-12). The alpha and beta chains form an alternating ring which encloses part of the gamma chain. CF(1) is attached to CF(0) by a central stalk formed by the gamma and epsilon chains, while a peripheral stalk is formed by the delta and b chains.

It localises to the cell membrane. It carries out the reaction ATP + H2O + 4 H(+)(in) = ADP + phosphate + 5 H(+)(out). In terms of biological role, produces ATP from ADP in the presence of a proton gradient across the membrane. The catalytic sites are hosted primarily by the beta subunits. This chain is ATP synthase subunit beta, found in Mycolicibacterium vanbaalenii (strain DSM 7251 / JCM 13017 / BCRC 16820 / KCTC 9966 / NRRL B-24157 / PYR-1) (Mycobacterium vanbaalenii).